A 145-amino-acid chain; its full sequence is SsrA-binding protein (145 aa).

Belongs to the SmpB family.

The protein localises to the cytoplasm. Required for rescue of stalled ribosomes mediated by trans-translation. Binds to transfer-messenger RNA (tmRNA), required for stable association of tmRNA with ribosomes. tmRNA and SmpB together mimic tRNA shape, replacing the anticodon stem-loop with SmpB. tmRNA is encoded by the ssrA gene; the 2 termini fold to resemble tRNA(Ala) and it encodes a 'tag peptide', a short internal open reading frame. During trans-translation Ala-aminoacylated tmRNA acts like a tRNA, entering the A-site of stalled ribosomes, displacing the stalled mRNA. The ribosome then switches to translate the ORF on the tmRNA; the nascent peptide is terminated with the 'tag peptide' encoded by the tmRNA and targeted for degradation. The ribosome is freed to recommence translation, which seems to be the essential function of trans-translation. This chain is SsrA-binding protein, found in Mesomycoplasma hyopneumoniae (strain 232) (Mycoplasma hyopneumoniae).